Here is an 842-residue protein sequence, read N- to C-terminus: MPLSYQHFRRILLLDEEAGPLEEELPRLADEDLNRRVAEDLNLQLPNVSIPWTHKVGNFTGLYSSTIPVFNPNWKTPSFPDIHLHQDIINKCEQFVGPLTVNEKRRLNLVMPARFFPIATKYLPLEKGIKPYYPDNVVNHYFQTRHYLHTLWKAGILYKRETTRSASFCGSPYSWEQELHHGAFLDGPSRMGEESFHHQSSGIFSRPPVGSSIQSKHQKSRLGPQSQQRPLDGSQQGRSGSIRAGVHSPTRRPFGVEPSGSRHAKNIASRSASCLHQSAVRKAAYPNHSTFERHSSSGHAVEFHNIPPSSAGSQSKRPVFSCWWLQFRNSEPCSDYCLTHLVNLLEDWGPCTEHGRHHIRIPRTPARVTGGVFLVDKNPHNTAESRLVVDFSQFSRGSSRVSWPKFAVPNLQSLTNLLSSNLSWLSLDVSAAFYHIPLHPAAMPHLLVGSSGLSRYVARLSSNSRIINHQYGTLPNLHDSCSRNLYVSLMLLFKTFGRKLHLYSHPIIMGFRKIPMGVGLSPFLLAQFTSAICSVVRRAFPHCLAFSYMDDVVLGAKSVQHLESLYTSVTNFLLSLGIHLNPNKTKRWGYSLNFMGYVIGSWGSLPQEHIRMKIKDCFRKLPVNRPIDWKVCQRIVGLLGFAAPFTQCGYPALMPLYACIQSKQAFTFSPTYKAFLCKQYLNLYPVARQRSGLCQVFADATPTGWGLAIGHQRMRGTFVAPLPIHTAELLAACFARSRSGAKLIGTDNSVVLSRKYTSFPWLLGCAANWILRGTSFVYVPSALNPADDPSRGRLGIYRPLLRLPFQPTTGRTSLYAVSPSVPSRLPDRVHFASPLHVAWRPP.

Positions 1–177 (MPLSYQHFRR…FCGSPYSWEQ (177 aa)) are terminal protein domain (TP). The tract at residues 178-345 (ELHHGAFLDG…YCLTHLVNLL (168 aa)) is spacer. The segment at 186 to 273 (DGPSRMGEES…AKNIASRSAS (88 aa)) is disordered. The span at 223–239 (GPQSQQRPLDGSQQGRS) shows a compositional bias: polar residues. Residues 346–689 (EDWGPCTEHG…YLNLYPVARQ (344 aa)) form a polymerase/reverse transcriptase domain (RT) region. In terms of domain architecture, Reverse transcriptase spans 356–599 (RHHIRIPRTP…YSLNFMGYVI (244 aa)). Mg(2+)-binding residues include Asp428, Asp550, and Asp551.

It belongs to the hepadnaviridae P protein family.

The enzyme catalyses DNA(n) + a 2'-deoxyribonucleoside 5'-triphosphate = DNA(n+1) + diphosphate. It catalyses the reaction Endonucleolytic cleavage to 5'-phosphomonoester.. Activated by host HSP70 and HSP40 in vitro to be able to bind the epsilon loop of the pgRNA. Because deletion of the RNase H region renders the protein partly chaperone-independent, the chaperones may be needed indirectly to relieve occlusion of the RNA-binding site by this domain. Inhibited by several reverse-transcriptase inhibitors: Lamivudine, Adefovir and Entecavir. Multifunctional enzyme that converts the viral RNA genome into dsDNA in viral cytoplasmic capsids. This enzyme displays a DNA polymerase activity that can copy either DNA or RNA templates, and a ribonuclease H (RNase H) activity that cleaves the RNA strand of RNA-DNA heteroduplexes in a partially processive 3'- to 5'-endonucleasic mode. Neo-synthesized pregenomic RNA (pgRNA) are encapsidated together with the P protein, and reverse-transcribed inside the nucleocapsid. Initiation of reverse-transcription occurs first by binding the epsilon loop on the pgRNA genome, and is initiated by protein priming, thereby the 5'-end of (-)DNA is covalently linked to P protein. Partial (+)DNA is synthesized from the (-)DNA template and generates the relaxed circular DNA (RC-DNA) genome. After budding and infection, the RC-DNA migrates in the nucleus, and is converted into a plasmid-like covalently closed circular DNA (cccDNA). The activity of P protein does not seem to be necessary for cccDNA generation, and is presumably released from (+)DNA by host nuclear DNA repair machinery. This Homo sapiens (Human) protein is Protein P.